Reading from the N-terminus, the 654-residue chain is DNA-directed RNA polymerase III subunit RPC3 (654 aa).

Phosphothreonine is present on Thr-27. 2 disordered regions span residues Leu-381–Pro-401 and Lys-422–His-448. Phosphoserine is present on residues Ser-392 and Ser-394. Positions Asp-429–Thr-444 are enriched in acidic residues. Residues Leu-581–Leu-602 form a leucine-zipper region.

It belongs to the eukaryotic RPC3/POLR3C RNA polymerase subunit family. In terms of assembly, component of the RNA polymerase III (Pol III) complex consisting of 17 subunits.

The protein resides in the cytoplasm. The protein localises to the nucleus. Its function is as follows. DNA-dependent RNA polymerase catalyzes the transcription of DNA into RNA using the four ribonucleoside triphosphates as substrates. Specific core component of RNA polymerase III which synthesizes small RNAs, such as 5S rRNA and tRNAs. This Saccharomyces cerevisiae (strain ATCC 204508 / S288c) (Baker's yeast) protein is DNA-directed RNA polymerase III subunit RPC3 (RPC82).